The following is a 280-amino-acid chain: MKSKTWIFRDVLSSHRTKAFDSLLCRRLPVSKATKHLQLGEHFLFFPPSFEKLDRDGYFNYQNPASLLGNPDLRYRRRIWGQGELVQYLPVTLDQEYTCHESIKYVKKIRDEHVVCIERTLLQERPENVSSPMDICLFERRVLMYTNSPANKTAVKMPVGEENYKILKNFTVTDMDIVAYGQMSLNPHRIHWDKEYSRYVEGYDDIIMQGPFSVQLLQKCIQPFLEQPIRQLRYRNLNYIYPNTTLSICQSLSSSSGMYTFQIRDLQKANLVYMKADVFC.

It belongs to the HTD2 family.

Its subcellular location is the mitochondrion. Its function is as follows. Mitochondrial 3-hydroxyacyl-thioester dehydratase involved in fatty acid biosynthesis. Required for respiratory growth and for normal mitochondrial morphology. The protein is Hydroxyacyl-thioester dehydratase type 2, mitochondrial (HTD2) of Saccharomyces cerevisiae (strain ATCC 204508 / S288c) (Baker's yeast).